We begin with the raw amino-acid sequence, 552 residues long: Dihydroxy-acid dehydratase (552 aa).

Residue aspartate 78 participates in Mg(2+) binding. Cysteine 119 contacts [2Fe-2S] cluster. Mg(2+) is bound by residues aspartate 120 and lysine 121. N6-carboxylysine is present on lysine 121. Cysteine 191 lines the [2Fe-2S] cluster pocket. Glutamate 442 provides a ligand contact to Mg(2+). The Proton acceptor role is filled by serine 468.

This sequence belongs to the IlvD/Edd family. In terms of assembly, homodimer. [2Fe-2S] cluster is required as a cofactor. It depends on Mg(2+) as a cofactor.

The catalysed reaction is (2R)-2,3-dihydroxy-3-methylbutanoate = 3-methyl-2-oxobutanoate + H2O. It catalyses the reaction (2R,3R)-2,3-dihydroxy-3-methylpentanoate = (S)-3-methyl-2-oxopentanoate + H2O. It participates in amino-acid biosynthesis; L-isoleucine biosynthesis; L-isoleucine from 2-oxobutanoate: step 3/4. It functions in the pathway amino-acid biosynthesis; L-valine biosynthesis; L-valine from pyruvate: step 3/4. In terms of biological role, functions in the biosynthesis of branched-chain amino acids. Catalyzes the dehydration of (2R,3R)-2,3-dihydroxy-3-methylpentanoate (2,3-dihydroxy-3-methylvalerate) into 2-oxo-3-methylpentanoate (2-oxo-3-methylvalerate) and of (2R)-2,3-dihydroxy-3-methylbutanoate (2,3-dihydroxyisovalerate) into 2-oxo-3-methylbutanoate (2-oxoisovalerate), the penultimate precursor to L-isoleucine and L-valine, respectively. This chain is Dihydroxy-acid dehydratase, found in Moorella thermoacetica (strain ATCC 39073 / JCM 9320).